Consider the following 249-residue polypeptide: Ribonuclease PH (249 aa).

Residues arginine 86 and 124-126 (GTR) each bind phosphate.

This sequence belongs to the RNase PH family. In terms of assembly, homohexameric ring arranged as a trimer of dimers.

The enzyme catalyses tRNA(n+1) + phosphate = tRNA(n) + a ribonucleoside 5'-diphosphate. Functionally, phosphorolytic 3'-5' exoribonuclease that plays an important role in tRNA 3'-end maturation. Removes nucleotide residues following the 3'-CCA terminus of tRNAs; can also add nucleotides to the ends of RNA molecules by using nucleoside diphosphates as substrates, but this may not be physiologically important. Probably plays a role in initiation of 16S rRNA degradation (leading to ribosome degradation) during starvation. The chain is Ribonuclease PH from Clostridium botulinum (strain Alaska E43 / Type E3).